Reading from the N-terminus, the 589-residue chain is Bifunctional protein TrpGD (589 aa).

The Glutamine amidotransferase type-1 domain occupies 46–241 (RVIVIDNYDS…LNIQDIQVKK (196 aa)). Residue 99–101 (GPG) coordinates L-glutamine. Cysteine 126 (nucleophile; for GATase activity) is an active-site residue. L-glutamine-binding positions include glutamine 130 and 176 to 177 (SL). Residues histidine 215 and glutamate 217 each act as for GATase activity in the active site. The interval 253–589 (ALKKLVEFED…MDYQKTLGNS (337 aa)) is anthranilate phosphoribosyltransferase.

In the C-terminal section; belongs to the anthranilate phosphoribosyltransferase family. As to quaternary structure, heterotetramer consisting of two non-identical subunits: a beta subunit (TrpG) and a large alpha subunit (TrpE).

The enzyme catalyses chorismate + L-glutamine = anthranilate + pyruvate + L-glutamate + H(+). The catalysed reaction is N-(5-phospho-beta-D-ribosyl)anthranilate + diphosphate = 5-phospho-alpha-D-ribose 1-diphosphate + anthranilate. The protein operates within amino-acid biosynthesis; L-tryptophan biosynthesis; L-tryptophan from chorismate: step 1/5. It participates in amino-acid biosynthesis; L-tryptophan biosynthesis; L-tryptophan from chorismate: step 2/5. In terms of biological role, part of a heterotetrameric complex that catalyzes the two-step biosynthesis of anthranilate, an intermediate in the biosynthesis of L-tryptophan. In the first step, the glutamine-binding beta subunit (TrpG) of anthranilate synthase (AS) provides the glutamine amidotransferase activity which generates ammonia as a substrate that, along with chorismate, is used in the second step, catalyzed by the large alpha subunit of AS (TrpE) to produce anthranilate. In the absence of TrpG, TrpE can synthesize anthranilate directly from chorismate and high concentrations of ammonia. In addition to synthesizing anthranilate, it also catalyzes the second step of the pathway, the transfer of the phosphoribosyl group of 5-phosphorylribose-1-pyrophosphate (PRPP) to anthranilate. The sequence is that of Bifunctional protein TrpGD (trpGD) from Thermotoga maritima (strain ATCC 43589 / DSM 3109 / JCM 10099 / NBRC 100826 / MSB8).